The sequence spans 312 residues: tRNA-cytidine(32) 2-sulfurtransferase (312 aa).

The short motif at 47–52 is the PP-loop motif element; that stretch reads SGGKDS. The [4Fe-4S] cluster site is built by cysteine 122, cysteine 125, and cysteine 213.

The protein belongs to the TtcA family. Homodimer. Mg(2+) serves as cofactor. The cofactor is [4Fe-4S] cluster.

It is found in the cytoplasm. The catalysed reaction is cytidine(32) in tRNA + S-sulfanyl-L-cysteinyl-[cysteine desulfurase] + AH2 + ATP = 2-thiocytidine(32) in tRNA + L-cysteinyl-[cysteine desulfurase] + A + AMP + diphosphate + H(+). The protein operates within tRNA modification. Functionally, catalyzes the ATP-dependent 2-thiolation of cytidine in position 32 of tRNA, to form 2-thiocytidine (s(2)C32). The sulfur atoms are provided by the cysteine/cysteine desulfurase (IscS) system. The protein is tRNA-cytidine(32) 2-sulfurtransferase of Shewanella frigidimarina (strain NCIMB 400).